We begin with the raw amino-acid sequence, 132 residues long: Small ribosomal subunit protein uS8c (132 aa).

It belongs to the universal ribosomal protein uS8 family. Part of the 30S ribosomal subunit.

It localises to the plastid. The protein localises to the chloroplast. Its function is as follows. One of the primary rRNA binding proteins, it binds directly to 16S rRNA central domain where it helps coordinate assembly of the platform of the 30S subunit. The polypeptide is Small ribosomal subunit protein uS8c (rps8) (Gracilaria tenuistipitata var. liui (Red alga)).